A 185-amino-acid polypeptide reads, in one-letter code: Phosphatidylglycerophosphatase GEP4, mitochondrial (185 aa).

A Phosphoryl acceptor motif is present at residues 45–49 (DKDNC).

It belongs to the GEP4 family.

It is found in the mitochondrion inner membrane. The catalysed reaction is a 1,2-diacyl-sn-glycero-3-phospho-(1'-sn-glycero-3'-phosphate) + H2O = a 1,2-diacyl-sn-glycero-3-phospho-(1'-sn-glycerol) + phosphate. It participates in phospholipid metabolism; phosphatidylglycerol biosynthesis; phosphatidylglycerol from CDP-diacylglycerol: step 2/2. Its function is as follows. Phosphatidylglycerophosphatase involved in the biosynthesis of cardiolipin (CL), a unique dimeric phosphoglycerolipid predominantly present in mitochondrial membranes and which has important functions for cellular energy metabolism, mitochondrial dynamics and the initiation of apoptotic pathways. Required for the stability of respiratory chain supercomplexes and for growth at elevated temperature, in presence of ethidium bromide or in absence of prohibitins. This chain is Phosphatidylglycerophosphatase GEP4, mitochondrial (GEP4), found in Saccharomyces cerevisiae (strain ATCC 204508 / S288c) (Baker's yeast).